A 200-amino-acid polypeptide reads, in one-letter code: Protein GrpE (200 aa).

Belongs to the GrpE family. In terms of assembly, homodimer.

The protein localises to the cytoplasm. Participates actively in the response to hyperosmotic and heat shock by preventing the aggregation of stress-denatured proteins, in association with DnaK and GrpE. It is the nucleotide exchange factor for DnaK and may function as a thermosensor. Unfolded proteins bind initially to DnaJ; upon interaction with the DnaJ-bound protein, DnaK hydrolyzes its bound ATP, resulting in the formation of a stable complex. GrpE releases ADP from DnaK; ATP binding to DnaK triggers the release of the substrate protein, thus completing the reaction cycle. Several rounds of ATP-dependent interactions between DnaJ, DnaK and GrpE are required for fully efficient folding. The polypeptide is Protein GrpE (Mycoplasma mycoides subsp. mycoides SC (strain CCUG 32753 / NCTC 10114 / PG1)).